The sequence spans 239 residues: uncharacterized protein (239 aa).

It belongs to the initiator RepB protein family.

Mutations in ORF 239 affects the incN plasmid pUC1 E.coli polA-independence but not its autonomous replication ability. This is an uncharacterized protein from Escherichia coli.